Reading from the N-terminus, the 45-residue chain is MKFFSVVTVFVLGLLAVANAVPLSPDPGNVIINGDCRVCNVHGGK.

The N-terminal stretch at methionine 1–alanine 20 is a signal peptide. A propeptide spans valine 21–proline 27 (removed by a dipeptidylpeptidase). The cysteines at positions 36 and 39 are disulfide-linked. The residue at position 43 (glycine 43) is a Glycine amide.

As to expression, hemolymph (at protein level).

The protein localises to the secreted. Its function is as follows. Secreted immune-induced peptide induced by Toll signaling. Has a role in resistance to bacterial and fungal infections. Has no activity against the fungus C.glabrata in vitro. The chain is Bomanin Short 1 from Drosophila melanogaster (Fruit fly).